Consider the following 192-residue polypeptide: Ras-like GTP-binding protein rhoA (192 aa).

Glycine 12 to threonine 19 contacts GTP. The short motif at tyrosine 34–tyrosine 42 is the Effector region element. Residues aspartate 59 to glutamine 63 and asparagine 117 to aspartate 120 contribute to the GTP site. Cysteine 189 carries the post-translational modification Cysteine methyl ester. Cysteine 189 is lipidated: S-geranylgeranyl cysteine. A propeptide spans methionine 190–leucine 192 (removed in mature form).

Belongs to the small GTPase superfamily. Rho family. May interact with unc-89 (via DN and PH domains). Interacts with bli-3 and memo-1. In larvae and adults, enriched at the tip of the head where the anterior sensory organ is located and in the pharyngeal nerve ring (at protein level). In embryos, enriched at the boundaries of dorsal cells undergoing intercalation, ventral enclosure and elongation.

It localises to the cell membrane. It is found in the cytoplasm. Its subcellular location is the cytoskeleton. The protein resides in the cell cortex. Its activity is regulated as follows. GTP hydrolysis is stimulated by unc-89. Functionally, required for ventral migration of epidermal cells during ventral enclosure in the embryo and for cell elongation. Also required for ventral migration of P cells during larval development. Involved in asymmetric spindle positioning during anaphase and establishment of cell polarity during embryo development. In adults, involved in regulation of multiple processes including locomotion, pharyngeal pumping, fecundity, ovulation, defecation and body morphology. In body wall muscles, regulates organization of myosin thick filaments downstream of unc-89. Association with the oxidase bli-3 promotes ROS production and this interaction may be modulated by memo-1, in order to control the oxidative stress response and longevity. This Caenorhabditis elegans protein is Ras-like GTP-binding protein rhoA.